Consider the following 289-residue polypeptide: Nucleotide-binding protein FRAAL4592 (289 aa).

13–20 (GLSGAGRS) lines the ATP pocket. 64–67 (DVRG) is a GTP binding site.

Belongs to the RapZ-like family.

Functionally, displays ATPase and GTPase activities. In Frankia alni (strain DSM 45986 / CECT 9034 / ACN14a), this protein is Nucleotide-binding protein FRAAL4592.